The primary structure comprises 218 residues: Probable chemoreceptor glutamine deamidase CheD (218 aa).

Belongs to the CheD family.

It catalyses the reaction L-glutaminyl-[protein] + H2O = L-glutamyl-[protein] + NH4(+). In terms of biological role, probably deamidates glutamine residues to glutamate on methyl-accepting chemotaxis receptors (MCPs), playing an important role in chemotaxis. In Saccharophagus degradans (strain 2-40 / ATCC 43961 / DSM 17024), this protein is Probable chemoreceptor glutamine deamidase CheD.